Consider the following 223-residue polypeptide: Imidazoleglycerol-phosphate dehydratase (223 aa).

Belongs to the imidazoleglycerol-phosphate dehydratase family.

The catalysed reaction is D-erythro-1-(imidazol-4-yl)glycerol 3-phosphate = 3-(imidazol-4-yl)-2-oxopropyl phosphate + H2O. Its pathway is amino-acid biosynthesis; L-histidine biosynthesis; L-histidine from 5-phospho-alpha-D-ribose 1-diphosphate: step 6/9. In Zygosaccharomyces bailii, this protein is Imidazoleglycerol-phosphate dehydratase (HIS3).